A 135-amino-acid polypeptide reads, in one-letter code: uncharacterized protein (135 aa).

Residues 4–24 traverse the membrane as a helical segment; sequence LGVFLILASIVCGVVAICGCT.

Its subcellular location is the membrane. This is an uncharacterized protein from Methanocaldococcus jannaschii (strain ATCC 43067 / DSM 2661 / JAL-1 / JCM 10045 / NBRC 100440) (Methanococcus jannaschii).